The sequence spans 165 residues: MEDRAGQQERPSLRLEKLQHWARHRQSGRLLVLAVSQLWLAVAVVPFAVSVACLNSACHMTTALPLGPGILGLLTGIVTLELRRAPRLWKLAGLLVLELSAEAFTLGGVLVSAYSLFLLSQRKPRCCRSQSLRYQELQEGLSELEEVPELETGPTVASTAKRTNQ.

A run of 3 helical transmembrane segments spans residues 31-51 (LVLA…AVSV), 60-80 (MTTA…IVTL), and 91-111 (LAGL…GVLV). A disordered region spans residues 145-165 (EEVPELETGPTVASTAKRTNQ). Over residues 155–165 (TVASTAKRTNQ) the composition is skewed to polar residues.

It is found in the membrane. This chain is Transmembrane protein 253 (TMEM253), found in Bos taurus (Bovine).